The sequence spans 163 residues: Calcium-binding protein 2 (163 aa).

The N-myristoyl glycine moiety is linked to residue Gly-2. EF-hand domains follow at residues 21-56, 72-89, 95-130, and 132-163; these read EEIE…LGYM, GKVD…KLLA, IGVR…LLGE, and LSQR…MMSR. 5 residues coordinate Ca(2+): Asp-34, Asp-36, Asp-38, Tyr-40, and Glu-45. Ca(2+) is bound by residues Asp-108, Asn-110, Asp-112, Cys-114, Glu-119, Asp-145, Asn-147, Asp-149, and Glu-156.

Its subcellular location is the cytoplasm. It localises to the perinuclear region. It is found in the cell membrane. The protein resides in the golgi apparatus. In terms of biological role, required for sound encoding at inner hair cells (IHCs) synapses, likely via inhibition of the inactivation of voltage-gated calcium channel of type 1.3 (Cav1.3) in the IHCs. Required for the normal transfer of light signals through the retina. The sequence is that of Calcium-binding protein 2 (CABP2) from Bos taurus (Bovine).